The primary structure comprises 94 residues: Large ribosomal subunit protein bL25 (94 aa).

It belongs to the bacterial ribosomal protein bL25 family. Part of the 50S ribosomal subunit; part of the 5S rRNA/L5/L18/L25 subcomplex. Contacts the 5S rRNA. Binds to the 5S rRNA independently of L5 and L18.

Its function is as follows. This is one of the proteins that binds to the 5S RNA in the ribosome where it forms part of the central protuberance. The protein is Large ribosomal subunit protein bL25 of Escherichia coli O6:K15:H31 (strain 536 / UPEC).